The chain runs to 246 residues: Cell division protein ZapD (246 aa).

This sequence belongs to the ZapD family. As to quaternary structure, interacts with FtsZ.

The protein resides in the cytoplasm. Functionally, cell division factor that enhances FtsZ-ring assembly. Directly interacts with FtsZ and promotes bundling of FtsZ protofilaments, with a reduction in FtsZ GTPase activity. The protein is Cell division protein ZapD of Vibrio atlanticus (strain LGP32) (Vibrio splendidus (strain Mel32)).